A 568-amino-acid polypeptide reads, in one-letter code: Phosphoprotein (568 aa).

Disordered stretches follow at residues 1-23 (MDQD…GGRE) and 38-320 (SEPT…GIGE). Residues 7–20 (ILKEDSEVEREAPG) are compositionally biased toward basic and acidic residues. Residues 33–41 (DAVLSSEPT) form an N0 binding region. Positions 50-59 (LHNTINTPQG) are enriched in polar residues. Ser68 bears the Phosphoserine; by host mark. Over residues 83–101 (RSGEESRVSGRTSKPEAEA) the composition is skewed to basic and acidic residues. Ser125 carries the phosphoserine; by host modification. The segment covering 150-168 (GIEDENREMAAHPDKRGED) has biased composition (basic and acidic residues). A compositionally biased stretch (polar residues) spans 191–206 (ASNNGRSMEPGSSHSA). Phosphoserine; by host is present on residues Ser192, Ser249, Ser257, and Ser260. The segment at 344-411 (FESSRDASYV…SFRDIYKRFS (68 aa)) is multimerization. Residues 364-429 (YAEMTFNVCG…LLMSNLSTLH (66 aa)) are a coiled coil. A l protein binding region spans residues 412-445 (EYQKEQNSLLMSNLSTLHIITDRGGKTDNTDSLT). Phosphoserine; by host occurs at positions 447 and 449. The interval 479 to 568 (DLIREDEFRD…VEEDIESLTN (90 aa)) is interaction with the nucleocapsid (N-RNA). Residues 496-516 (QERDTEPRASNASRLLPSKEK) are disordered. A formation of N-RNA complex involved in transcription and replication region spans residues 547-566 (KTDQEVKAVMELVEEDIESL).

The protein belongs to the respirovirus P protein family. As to quaternary structure, homotetramer. Interacts (via multimerization domain) with polymerase L; this interaction forms the polymerase complex. Interacts (via N-terminus) with N0; this interaction allows P to chaperon N0 before encapsidation and form the N-P complex. Interacts (via C-terminus) with N-RNA template; this interaction positions the polymerase on the template. In terms of processing, phosphorylated by PKC/PRKCZ, and other unknown kinases. Phosphorylation is necessary for viral transcription and replication. The N-terminus contains the majority of phosphorylated sites. Ser-249 is the major site of phosphorylation, but is not necessary for most functions.

It localises to the host cytoplasm. Its function is as follows. Essential cofactor of the RNA polymerase L that plays a central role in the transcription and replication by forming the polymerase complex with RNA polymerase L and recruiting L to the genomic N-RNA template for RNA synthesis. Also plays a central role in the encapsidation of nascent RNA chains by forming the encapsidation complex with the nucleocapsid protein N (N-P complex). Acts as a chaperone for newly synthesized free N protein, so-called N0, allowing encapsidation of nascent RNA chains during replication. The nucleoprotein protein N prevents excessive phosphorylation of P, which leads to down-regulation of viral transcription/ replication. Participates, together with N, in the formation of viral factories (viroplasms), which are large inclusions in the host cytoplasm where replication takes place. Recruits host PI4KB and remodel the host endoplasmic reticulum membrane to form viral replication factories. The polypeptide is Phosphoprotein (P/V/C) (Cavia cutleri (Guinea pig)).